We begin with the raw amino-acid sequence, 1012 residues long: Axonemal dynein light chain domain-containing protein 1 (1012 aa).

Residues 1-17 (MSLPKTPSTPLNSTSTS) show a composition bias toward low complexity. A disordered region spans residues 1–34 (MSLPKTPSTPLNSTSTSESKKLKVSVAKEGTRGL). 3 coiled-coil regions span residues 317 to 402 (QRIL…IWSS), 447 to 486 (EDLA…IVKD), and 572 to 597 (SERQ…RING). A compositionally biased stretch (acidic residues) spans 841 to 854 (PEIDESFKEDEEES). Disordered stretches follow at residues 841-879 (PEID…TEKE) and 963-1012 (LEEL…KKGH). Basic and acidic residues-rich tracts occupy residues 855–879 (KEDR…TEKE) and 963–987 (LEEL…REVK). Residues 988–997 (EEEEQQEEEE) show a composition bias toward acidic residues.

Highly expressed in testis. Highly expressed in the round and late spermatids.

The protein resides in the cytoplasm. Functionally, may be essential for spermiogenesis and male fertility probably by regulating the manchette dynamics, spermatid head shaping and sperm flagellum assembly. In Homo sapiens (Human), this protein is Axonemal dynein light chain domain-containing protein 1.